Consider the following 57-residue polypeptide: Delta-elapitoxin-Cb1a (57 aa).

4 disulfides stabilise this stretch: cysteine 3–cysteine 22, cysteine 15–cysteine 36, cysteine 40–cysteine 49, and cysteine 50–cysteine 55.

This sequence belongs to the three-finger toxin family. Short-chain subfamily. Expressed by the venom gland.

The protein localises to the secreted. Functionally, this toxin shifts the voltage-dependence of Nav1.4/SCN4A activation to more hyperpolarised potentials, inhibits inactivation, and produces large ramp currents, consistent with its profound effects on contractile force in an isolated skeletal muscle preparation. This toxin produces large muscle contractions and fasciculations in the indirectly stimulated chick biventer cervicis nerve-muscle assay, which are significantly inhibited by the addition of the sodium channel antagonist tetrodotoxin. The chain is Delta-elapitoxin-Cb1a from Calliophis bivirgatus (Blue Malaysian coral snake).